The sequence spans 338 residues: Cytoskeleton protein RodZ (338 aa).

Residues 1–111 are Cytoplasmic-facing; the sequence is MNTEATHDQN…LGKRRKKRDG (111 aa). Residues 19 to 71 enclose the HTH cro/C1-type domain; sequence LRNAREQLGLSQQAVAERLCLKVSTVRDIEEDKAPADLASTFLRGYIRSYARL. The H-T-H motif DNA-binding region spans 30-49; that stretch reads QQAVAERLCLKVSTVRDIEE. Residues 112-132 traverse the membrane as a helical; Signal-anchor for type II membrane protein segment; that stretch reads WLMTFTWLVLFVVIGLSGAWW. Residues 133–338 lie on the Periplasmic side of the membrane; sequence WQDHKAQQEE…TLNAEQSPAQ (206 aa). The span at 155-169 shows a compositional bias: polar residues; it reads NANGTNSQSIPLENS. Positions 155–240 are disordered; it reads NANGTNSQSI…TTPDTATPLP (86 aa). Residues 170-188 are compositionally biased toward low complexity; the sequence is TTTVPEATPAPAAPVDTTA. The segment covering 203–217 has biased composition (polar residues); that stretch reads EPQQNAVVPPSQANV. Residues 218–240 are compositionally biased toward low complexity; that stretch reads DTATTAPAAPATTTTPDTATPLP.

It belongs to the RodZ family.

It localises to the cell inner membrane. In terms of biological role, cytoskeletal protein that is involved in cell-shape control through regulation of the length of the long axis. In Escherichia fergusonii (strain ATCC 35469 / DSM 13698 / CCUG 18766 / IAM 14443 / JCM 21226 / LMG 7866 / NBRC 102419 / NCTC 12128 / CDC 0568-73), this protein is Cytoskeleton protein RodZ.